Reading from the N-terminus, the 145-residue chain is Ribosomal RNA large subunit methyltransferase H (145 aa).

S-adenosyl-L-methionine is bound by residues Leu68, Gly95, and 113-118 (FSKMTF).

This sequence belongs to the RNA methyltransferase RlmH family. Homodimer.

It localises to the cytoplasm. It catalyses the reaction pseudouridine(1915) in 23S rRNA + S-adenosyl-L-methionine = N(3)-methylpseudouridine(1915) in 23S rRNA + S-adenosyl-L-homocysteine + H(+). Functionally, specifically methylates the pseudouridine at position 1915 (m3Psi1915) in 23S rRNA. The chain is Ribosomal RNA large subunit methyltransferase H from Mycoplasmopsis pulmonis (strain UAB CTIP) (Mycoplasma pulmonis).